The sequence spans 402 residues: S-adenosylmethionine synthase (402 aa).

H15 contacts ATP. A Mg(2+)-binding site is contributed by D17. E43 contributes to the K(+) binding site. Residues E56 and Q99 each coordinate L-methionine. The flexible loop stretch occupies residues 99-109 (QSPDIAQGVDT). ATP contacts are provided by residues 174-176 (DGK), 247-248 (RF), D256, 262-263 (RK), A279, and K283. D256 contacts L-methionine. K287 lines the L-methionine pocket.

Belongs to the AdoMet synthase family. In terms of assembly, homotetramer; dimer of dimers. Mg(2+) serves as cofactor. It depends on K(+) as a cofactor.

The protein resides in the cytoplasm. It catalyses the reaction L-methionine + ATP + H2O = S-adenosyl-L-methionine + phosphate + diphosphate. Its pathway is amino-acid biosynthesis; S-adenosyl-L-methionine biosynthesis; S-adenosyl-L-methionine from L-methionine: step 1/1. In terms of biological role, catalyzes the formation of S-adenosylmethionine (AdoMet) from methionine and ATP. The overall synthetic reaction is composed of two sequential steps, AdoMet formation and the subsequent tripolyphosphate hydrolysis which occurs prior to release of AdoMet from the enzyme. The chain is S-adenosylmethionine synthase from Streptomyces coelicolor (strain ATCC BAA-471 / A3(2) / M145).